Reading from the N-terminus, the 795-residue chain is MKPMRNRKQAPSFRKLLKTSKLKLDNKLKNKQFKQESSAKKRRKEQKQLREAVRDVRSKIPKPLETVKKKQPVEEEYEVEEESLPLDMMDEDDVQLMKEMAQRASFLTRDLTYSEPVHANKRKRDDVINKYEKMPRKSKSEPEKEVIHLLPIKDRHGIIPQTMEKPVIPSEEQEENEEEMDTEHTEEVPEEPLRIMTTEELLVHRQVTLEQRKTHIATLASAILSEPENNIRKLKELRSMLMEQDPSVAVTVRKLVMLSLMEVFKDITPSYKIRPLTEAEKAARVKKDTQKLREFEEGLISQYKFYLENLEQILKDWKQMKTKKSEVVSLHAYKGLAEIAVKCLCELMVSLSHFNFHNNIIVLVVPLVNDKCRQISELSMEATRKLFRQDKFGHASLAAVKVISGLVKSRNYDVRPEVLQLLLHLRIKEVEVKKDTEDIAPKQKIMSYKDKKKNLSRMQRKWKKAEEKLERELLEAEASESKEKKLKLNTETLNIVFLTYFRILKRAQKSVLLPSVLEGLAKFAHLINVEFFDDLLIVLHKLIDSGDLTYRESLHCVQTAFNILSGQGDVLNIDPLKFYTHLYKTLYGLHAGATNDDTLIALQCLDVMLTRRRRQVSQQRALAFIKRLSTLALHVLPDSSIGILSTNRVLMQTFPKTDLLLDSDSQGSGIYLPELDEPEYCNAQNSALWELHTLMRHYHPVVQIFAAHLSAGAPSEGSGALKAELSRRSAQELFADYSIKEMTFNPPVSESVPKRKTKSRAFDLSEDLEQLIQAQLEKVSSLHVDFSSCIKAQSV.

3 disordered regions span residues 1-88, 124-144, and 168-190; these read MKPM…PLDM, RDDV…EPEK, and IPSE…EVPE. 2 stretches are compositionally biased toward basic and acidic residues: residues 22 to 39 and 46 to 58; these read LKLD…ESSA and QKQL…DVRS. Positions 74–88 are enriched in acidic residues; it reads EEEYEVEEESLPLDM. Positions 171 to 181 are enriched in acidic residues; it reads EEQEENEEEMD. Residues 447–492 adopt a coiled-coil conformation; that stretch reads SYKDKKKNLSRMQRKWKKAEEKLERELLEAEASESKEKKLKLNTET.

This sequence belongs to the CBF/MAK21 family.

It is found in the nucleus. Its subcellular location is the nucleolus. This Xenopus laevis (African clawed frog) protein is Nucleolar complex protein 3 homolog (noc3l).